We begin with the raw amino-acid sequence, 392 residues long: Homoserine O-acetyltransferase (392 aa).

The AB hydrolase-1 domain maps to 52–356; it reads NVVVVLHALT…ICGHDGFLVE (305 aa). Serine 157 (nucleophile) is an active-site residue. Arginine 227 is a substrate binding site. Active-site residues include aspartate 320 and histidine 350. Residue aspartate 351 participates in substrate binding. A disordered region spans residues 373–392; it reads SQSAGPGGAGPGSRKGTTRR.

Belongs to the AB hydrolase superfamily. MetX family. As to quaternary structure, homodimer.

Its subcellular location is the cytoplasm. The catalysed reaction is L-homoserine + acetyl-CoA = O-acetyl-L-homoserine + CoA. The protein operates within amino-acid biosynthesis; L-methionine biosynthesis via de novo pathway; O-acetyl-L-homoserine from L-homoserine: step 1/1. Its function is as follows. Transfers an acetyl group from acetyl-CoA to L-homoserine, forming acetyl-L-homoserine. The polypeptide is Homoserine O-acetyltransferase (Mycobacterium avium (strain 104)).